The sequence spans 223 residues: Ribosomal RNA small subunit methyltransferase G (223 aa).

S-adenosyl-L-methionine contacts are provided by residues Gly90, Leu95, 141 to 142, and Arg156; that span reads VE.

It belongs to the methyltransferase superfamily. RNA methyltransferase RsmG family.

The protein resides in the cytoplasm. It catalyses the reaction guanosine(527) in 16S rRNA + S-adenosyl-L-methionine = N(7)-methylguanosine(527) in 16S rRNA + S-adenosyl-L-homocysteine. Its function is as follows. Specifically methylates the N7 position of guanine in position 527 of 16S rRNA. The chain is Ribosomal RNA small subunit methyltransferase G from Ralstonia nicotianae (strain ATCC BAA-1114 / GMI1000) (Ralstonia solanacearum).